The sequence spans 845 residues: Lon protease (845 aa).

The region spanning 45-242 (MPILALRNMI…RLLYLLHKEL (198 aa)) is the Lon N-terminal domain. 393–400 (GPPGVGKT) provides a ligand contact to ATP. In terms of domain architecture, Lon proteolytic spans 629–811 (NGDAGVVIGL…NEVLKEALLE (183 aa)). Active-site residues include S717 and K760.

It belongs to the peptidase S16 family. As to quaternary structure, homohexamer. Organized in a ring with a central cavity.

The protein resides in the cytoplasm. The enzyme catalyses Hydrolysis of proteins in presence of ATP.. Functionally, ATP-dependent serine protease that mediates the selective degradation of mutant and abnormal proteins as well as certain short-lived regulatory proteins. Required for cellular homeostasis and for survival from DNA damage and developmental changes induced by stress. Degrades polypeptides processively to yield small peptide fragments that are 5 to 10 amino acids long. Binds to DNA in a double-stranded, site-specific manner. In Porphyromonas gingivalis (strain ATCC 33277 / DSM 20709 / CIP 103683 / JCM 12257 / NCTC 11834 / 2561), this protein is Lon protease.